A 102-amino-acid chain; its full sequence is Co-chaperonin GroES (102 aa).

Belongs to the GroES chaperonin family. Heptamer of 7 subunits arranged in a ring. Interacts with the chaperonin GroEL.

The protein resides in the cytoplasm. In terms of biological role, together with the chaperonin GroEL, plays an essential role in assisting protein folding. The GroEL-GroES system forms a nano-cage that allows encapsulation of the non-native substrate proteins and provides a physical environment optimized to promote and accelerate protein folding. GroES binds to the apical surface of the GroEL ring, thereby capping the opening of the GroEL channel. In Chlamydia pneumoniae (Chlamydophila pneumoniae), this protein is Co-chaperonin GroES.